Reading from the N-terminus, the 238-residue chain is Lipid transferase CIDEC (238 aa).

The tract at residues 1–35 (MEYAMKSLSLLYPKSLSRHVSVRTSVVTQQLLSEP) is required for liquid-liquid phase separation (LLPS). Positions 41-118 (RARPCRVSTA…VLQKGQKWQP (78 aa)) constitute a CIDE-N domain.

It belongs to the CIDE family. Homodimer. Homooligomer; undergoes liquid-liquid phase separation (LLPS) via its N-terminus, facilitating lipid droplet fusion, occurs at the lipid droplet contact sites. Interacts with CIDEA. Interacts with PLIN1. Interacts with NFAT5; this interaction is direct and retains NFAT5 in the cytoplasm. Interacts with CEBPB. Interacts with isoform CLSTN3beta of CLSTN3; inhibiting the lipid transferase activity of CIDEC. Ubiquitinated and targeted to proteasomal degradation, resulting in a short half-life (about 15 minutes in 3T3-L1 cells). Protein stability depends on triaclyglycerol synthesis, fatty acid availability and lipid droplet formation. In terms of tissue distribution, expressed mainly in adipose tissue, small intestine, heart, colon and stomach and, at lower levels, in brain, kidney and liver.

Its subcellular location is the lipid droplet. It is found in the endoplasmic reticulum. It localises to the nucleus. The enzyme catalyses a triacyl-sn-glycerol(in) = a triacyl-sn-glycerol(out). Its function is as follows. Lipid transferase specifically expressed in white adipose tissue, which promotes unilocular lipid droplet formation by mediating lipid droplet fusion. Lipid droplet fusion promotes their enlargement, restricting lipolysis and favoring lipid storage. Localizes on the lipid droplet surface, at focal contact sites between lipid droplets, and mediates atypical lipid droplet fusion by undergoing liquid-liquid phase separation (LLPS) and promoting directional net neutral lipid transfer from the smaller to larger lipid droplets. The transfer direction may be driven by the internal pressure difference between the contacting lipid droplet pair. Its role in neutral lipid transfer and lipid droplet enlargement is activated by the interaction with PLIN1. May also act as a CEBPB coactivator in the white adipose tissue to control the expression of a subset of CEBPB downstream target genes, including SOCS1, SOCS3, TGFB1, TGFBR1, ID2 and XDH. When overexpressed in preadipocytes, induces apoptosis or increases cell susceptibility to apoptosis induced by serum deprivation or TGFB treatment. The sequence is that of Lipid transferase CIDEC from Homo sapiens (Human).